The following is a 117-amino-acid chain: MKGLLYLALAIVSEVFGSTMLKLSEGFTQAWPIGGVIAGFLSAFTFLSFSLKTIDLSSAYATWSGVGTALTAIVGFLLFGETISLKGVFGLTLVIAGVVVLNQSKAPAKEKKQTVCE.

The next 4 helical transmembrane spans lie at 3–23 (GLLY…MLKL), 31–51 (WPIG…SFSL), 59–79 (AYAT…FLLF), and 81–101 (ETIS…VVVL).

This sequence belongs to the drug/metabolite transporter (DMT) superfamily. Small multidrug resistance (SMR) (TC 2.A.7.1) family. EbrA/EbrB subfamily. The efflux pump is composed of EbrA and EbrB.

The protein resides in the cell membrane. Part of a multidrug efflux pump. Confers resistance to cationic lipophilic dyes such as ethidium bromide, acriflavine, pyronine Y and safranin O. The efflux is probably coupled to an influx of protons. This chain is Multidrug resistance protein EbrB (ebrB), found in Bacillus atrophaeus.